The chain runs to 288 residues: NAD kinase (288 aa).

D73 (proton acceptor) is an active-site residue. NAD(+) contacts are provided by residues 73 to 74 (DG), R78, 144 to 145 (NE), D174, 185 to 190 (TAYSLS), and A209.

It belongs to the NAD kinase family. A divalent metal cation serves as cofactor.

Its subcellular location is the cytoplasm. It carries out the reaction NAD(+) + ATP = ADP + NADP(+) + H(+). Involved in the regulation of the intracellular balance of NAD and NADP, and is a key enzyme in the biosynthesis of NADP. Catalyzes specifically the phosphorylation on 2'-hydroxyl of the adenosine moiety of NAD to yield NADP. This is NAD kinase from Porphyromonas gingivalis (strain ATCC 33277 / DSM 20709 / CIP 103683 / JCM 12257 / NCTC 11834 / 2561).